We begin with the raw amino-acid sequence, 778 residues long: Dynein axonemal intermediate chain 4 (778 aa).

6 WD repeats span residues 477–517 (HCES…QTPI), 526–573 (LHTS…ECVD), 586–629 (RHIS…QYLE), 633–673 (AHKR…PVMG), 676–715 (SGQR…LDPT), and 721–760 (SPGV…AGGG).

Part of the multisubunit axonemal dynein complex formed at least of two heavy chains and a number of intermediate and light chains.

It is found in the cytoplasm. It localises to the cytoskeleton. Its subcellular location is the flagellum axoneme. The protein localises to the cilium axoneme. The protein resides in the dynein axonemal particle. Functionally, plays a critical role in the assembly of axonemal dynein complex. Plays a key role in ciliary motility. The polypeptide is Dynein axonemal intermediate chain 4 (Danio rerio (Zebrafish)).